A 101-amino-acid polypeptide reads, in one-letter code: uncharacterized protein (101 aa).

Residues 68–90 form a helical membrane-spanning segment; that stretch reads LAFAFCGRANTFISCFISFASLI.

The protein localises to the membrane. This is an uncharacterized protein from Saccharomyces cerevisiae (strain ATCC 204508 / S288c) (Baker's yeast).